A 476-amino-acid chain; its full sequence is tRNA (cytosine(72)-C(5))-methyltransferase NSUN6 (476 aa).

Positions 111 to 203 constitute a PUA domain; that stretch reads QGEVIVGAQC…IGIRMTEPIY (93 aa). S-adenosyl-L-methionine contacts are provided by residues 242–248, Asp266, Asp293, and Asp323; that span reads CAAPGGK. Residue Cys373 is the Nucleophile of the active site. Position 419 is an N6-acetyllysine (Lys419).

This sequence belongs to the class I-like SAM-binding methyltransferase superfamily. RsmB/NOP family.

The protein localises to the cytoplasm. The catalysed reaction is cytidine(72) in tRNA(Thr) + S-adenosyl-L-methionine = 5-methylcytidine(72) in tRNA(Thr) + S-adenosyl-L-homocysteine + H(+). The enzyme catalyses cytidine(72) in tRNA(Cys) + S-adenosyl-L-methionine = 5-methylcytidine(72) in tRNA(Cys) + S-adenosyl-L-homocysteine + H(+). Functionally, S-adenosyl-L-methionine-dependent methyltransferase that specifically methylates the C5 position of cytosine 72 in tRNA(Thr)(TGT) and tRNA(Cys)(GCA). In vitro also methylates tRNA(Thr)(AGT). Methylation requires, in the acceptor stem region, the presence of the 3'-CCA terminus, the target site C72, the discriminator base U73, and the second and third base pairs (2:71 and 3:70) in the tRNA substrates. The sequence is that of tRNA (cytosine(72)-C(5))-methyltransferase NSUN6 from Mus musculus (Mouse).